The following is a 194-amino-acid chain: Holliday junction branch migration complex subunit RuvA (194 aa).

Residues 1–64 (MIGRLRGILA…EDSVALYGFL (64 aa)) form a domain I region. Residues 65 to 140 (REGERRLFRD…RAADFSSGAP (76 aa)) form a domain II region. Positions 140–144 (PITGQ) are flexible linker. The segment at 145–194 (LGPDAVSEATVALQQLGYKPAEAARMARDAGAEGDEVATVIRKALQAALR) is domain III.

It belongs to the RuvA family. As to quaternary structure, homotetramer. Forms an RuvA(8)-RuvB(12)-Holliday junction (HJ) complex. HJ DNA is sandwiched between 2 RuvA tetramers; dsDNA enters through RuvA and exits via RuvB. An RuvB hexamer assembles on each DNA strand where it exits the tetramer. Each RuvB hexamer is contacted by two RuvA subunits (via domain III) on 2 adjacent RuvB subunits; this complex drives branch migration. In the full resolvosome a probable DNA-RuvA(4)-RuvB(12)-RuvC(2) complex forms which resolves the HJ.

Its subcellular location is the cytoplasm. In terms of biological role, the RuvA-RuvB-RuvC complex processes Holliday junction (HJ) DNA during genetic recombination and DNA repair, while the RuvA-RuvB complex plays an important role in the rescue of blocked DNA replication forks via replication fork reversal (RFR). RuvA specifically binds to HJ cruciform DNA, conferring on it an open structure. The RuvB hexamer acts as an ATP-dependent pump, pulling dsDNA into and through the RuvAB complex. HJ branch migration allows RuvC to scan DNA until it finds its consensus sequence, where it cleaves and resolves the cruciform DNA. The protein is Holliday junction branch migration complex subunit RuvA of Xanthomonas euvesicatoria pv. vesicatoria (strain 85-10) (Xanthomonas campestris pv. vesicatoria).